A 137-amino-acid polypeptide reads, in one-letter code: 14 kDa proline-rich protein DC2.15 (137 aa).

A signal peptide spans 1 to 25; the sequence is MGSKNSASVALFFTLNILFFALVSS. Residues 30-53 are disordered; sequence PDPYKPKPKPTPKPTPTPYPSAGK. Residues 38-48 are compositionally biased toward pro residues; it reads KPTPKPTPTPY. A helical membrane pass occupies residues 88–104; it reads LEGLVNLEAAVCLCTAI.

It localises to the membrane. In terms of biological role, may be connected with the initiation of embryogenesis or with the metabolic changes produced by the removal of auxins. This Daucus carota (Wild carrot) protein is 14 kDa proline-rich protein DC2.15.